A 284-amino-acid chain; its full sequence is uncharacterized protein (284 aa).

Positions 1–10 are enriched in polar residues; that stretch reads MSNSVTNFEM. The segment at 1-28 is disordered; that stretch reads MSNSVTNFEMSSVLPGKKPCQGKNNESQ.

This is an uncharacterized protein from Escherichia coli (strain K12).